Reading from the N-terminus, the 284-residue chain is 2-dehydro-3-deoxyphosphooctonate aldolase (284 aa).

This sequence belongs to the KdsA family.

Its subcellular location is the cytoplasm. It catalyses the reaction D-arabinose 5-phosphate + phosphoenolpyruvate + H2O = 3-deoxy-alpha-D-manno-2-octulosonate-8-phosphate + phosphate. It participates in carbohydrate biosynthesis; 3-deoxy-D-manno-octulosonate biosynthesis; 3-deoxy-D-manno-octulosonate from D-ribulose 5-phosphate: step 2/3. It functions in the pathway bacterial outer membrane biogenesis; lipopolysaccharide biosynthesis. The protein is 2-dehydro-3-deoxyphosphooctonate aldolase of Methylobacterium radiotolerans (strain ATCC 27329 / DSM 1819 / JCM 2831 / NBRC 15690 / NCIMB 10815 / 0-1).